The primary structure comprises 217 residues: RING-H2 finger protein ATL70 (217 aa).

Residues 61 to 81 (IGGFRYGIGVSIGVLLLITTI) traverse the membrane as a helical segment. The segment at 147-189 (CAICLGDYKGKHLLRQLPDCNHLFHLKCIDTWLRLNPTCPVCR) adopts an RING-type; atypical zinc-finger fold.

This sequence belongs to the RING-type zinc finger family. ATL subfamily.

The protein resides in the membrane. The enzyme catalyses S-ubiquitinyl-[E2 ubiquitin-conjugating enzyme]-L-cysteine + [acceptor protein]-L-lysine = [E2 ubiquitin-conjugating enzyme]-L-cysteine + N(6)-ubiquitinyl-[acceptor protein]-L-lysine.. It functions in the pathway protein modification; protein ubiquitination. This chain is RING-H2 finger protein ATL70 (ATL70), found in Arabidopsis thaliana (Mouse-ear cress).